The primary structure comprises 177 residues: Large ribosomal subunit protein uL6 (177 aa).

This sequence belongs to the universal ribosomal protein uL6 family. As to quaternary structure, part of the 50S ribosomal subunit.

Functionally, this protein binds to the 23S rRNA, and is important in its secondary structure. It is located near the subunit interface in the base of the L7/L12 stalk, and near the tRNA binding site of the peptidyltransferase center. The protein is Large ribosomal subunit protein uL6 of Vibrio vulnificus (strain CMCP6).